Here is a 156-residue protein sequence, read N- to C-terminus: Ribosome maturation factor RimP (156 aa).

Belongs to the RimP family.

The protein localises to the cytoplasm. Functionally, required for maturation of 30S ribosomal subunits. This is Ribosome maturation factor RimP from Bacillus cytotoxicus (strain DSM 22905 / CIP 110041 / 391-98 / NVH 391-98).